A 549-amino-acid chain; its full sequence is Hydroxylamine reductase (549 aa).

C5, C8, C17, and C23 together coordinate [4Fe-4S] cluster. 8 residues coordinate hybrid [4Fe-2O-2S] cluster: H244, E268, C312, C403, C431, C456, E491, and K493. A Cysteine persulfide modification is found at C403.

This sequence belongs to the HCP family. [4Fe-4S] cluster serves as cofactor. It depends on hybrid [4Fe-2O-2S] cluster as a cofactor.

It is found in the cytoplasm. The catalysed reaction is A + NH4(+) + H2O = hydroxylamine + AH2 + H(+). Catalyzes the reduction of hydroxylamine to form NH(3) and H(2)O. This chain is Hydroxylamine reductase, found in Caldanaerobacter subterraneus subsp. tengcongensis (strain DSM 15242 / JCM 11007 / NBRC 100824 / MB4) (Thermoanaerobacter tengcongensis).